A 120-amino-acid polypeptide reads, in one-letter code: Ribonuclease P protein component (120 aa).

This sequence belongs to the RnpA family. Consists of a catalytic RNA component (M1 or rnpB) and a protein subunit.

It carries out the reaction Endonucleolytic cleavage of RNA, removing 5'-extranucleotides from tRNA precursor.. In terms of biological role, RNaseP catalyzes the removal of the 5'-leader sequence from pre-tRNA to produce the mature 5'-terminus. It can also cleave other RNA substrates such as 4.5S RNA. The protein component plays an auxiliary but essential role in vivo by binding to the 5'-leader sequence and broadening the substrate specificity of the ribozyme. This Dictyoglomus thermophilum (strain ATCC 35947 / DSM 3960 / H-6-12) protein is Ribonuclease P protein component.